Here is a 244-residue protein sequence, read N- to C-terminus: Ras-related protein Rab-12 (244 aa).

The residue at position 1 (M1) is an N-acetylmethionine. Positions M1–R10 are enriched in low complexity. The segment at M1–R37 is disordered. Phosphoserine occurs at positions 21 and 25. GDP is bound at residue G52. GTP contacts are provided by G52, V53, G54, K55, and T56. The GDP site is built by G54, K55, T56, and S57. T56 serves as a coordination point for Mg(2+). Short sequence motifs (switch) lie at residues D65–F79 and D97–S114. Residues S73 and T74 each contribute to the GTP site. Residues T74 and D97 each coordinate Mg(2+). G100 is a binding site for GTP. At S106 the chain carries Phosphoserine; by LRRK2. GDP is bound by residues N155, K156, D158, and C159. Residues N155, K156, and D158 each contribute to the GTP site. GTP is bound by residues S186, A187, and K188. The GDP site is built by A187 and K188. The disordered stretch occupies residues Q225 to C244. Over residues P228–R238 the composition is skewed to pro residues. Residues C243 and C244 are each lipidated (S-geranylgeranyl cysteine).

This sequence belongs to the small GTPase superfamily. Rab family. In terms of assembly, interacts with RABIF. Interacts with OPTN. Interacts with LRRK2; interaction facilitates phosphorylation of Ser-106. Interacts with GDI1, GDI2, CHM and CHML; these interactions are disrupted by phosphorylation on Ser-106. Interacts with RILPL1 and RILPL2; these interactions are dependent on phosphorylation of Ser-106. Mg(2+) is required as a cofactor. Phosphorylation of Ser-106 in the switch II region by LRRK2 prevents the association of RAB regulatory proteins, including CHM, CHML and RAB GDP dissociation inhibitors GDI1 and GDI2.

The protein resides in the recycling endosome membrane. It is found in the lysosome membrane. Its subcellular location is the golgi apparatus membrane. It localises to the cytoplasmic vesicle. The protein localises to the autophagosome. The enzyme catalyses GTP + H2O = GDP + phosphate + H(+). Its activity is regulated as follows. Regulated by guanine nucleotide exchange factors (GEFs) including DENND3 which promote the exchange of bound GDP for free GTP. Regulated by GTPase activating proteins (GAPs) which increase the GTP hydrolysis activity. Inhibited by GDP dissociation inhibitors (GDIs). In terms of biological role, the small GTPases Rab are key regulators of intracellular membrane trafficking, from the formation of transport vesicles to their fusion with membranes. Rabs cycle between an inactive GDP-bound form and an active GTP-bound form that is able to recruit to membranes different sets of downstream effectors directly responsible for vesicle formation, movement, tethering and fusion. RAB12 may play a role in protein transport from recycling endosomes to lysosomes regulating, for instance, the degradation of the transferrin receptor. Involved in autophagy. This is Ras-related protein Rab-12 from Homo sapiens (Human).